The chain runs to 360 residues: Peptide chain release factor 1 (360 aa).

Q235 is subject to N5-methylglutamine. Positions 285–295 are enriched in basic and acidic residues; it reads RQAAEQTDMRR. A disordered region spans residues 285–309; the sequence is RQAAEQTDMRRNLLGSGDRSDKIRT.

It belongs to the prokaryotic/mitochondrial release factor family. Post-translationally, methylated by PrmC. Methylation increases the termination efficiency of RF1.

It is found in the cytoplasm. Its function is as follows. Peptide chain release factor 1 directs the termination of translation in response to the peptide chain termination codons UAG and UAA. This chain is Peptide chain release factor 1, found in Haemophilus influenzae (strain 86-028NP).